A 302-amino-acid polypeptide reads, in one-letter code: Urease accessory protein UreG (302 aa).

Composition is skewed to basic and acidic residues over residues 1–32 (MHDP…DHVH), 40–56 (HEHE…EHGH), and 64–76 (HAHE…THEH). A disordered region spans residues 1-76 (MHDPGEHGHG…EHAHGHTHEH (76 aa)). 105-112 (GPVGSGKT) lines the GTP pocket.

The protein belongs to the SIMIBI class G3E GTPase family. UreG subfamily. As to quaternary structure, homodimer. UreD, UreF and UreG form a complex that acts as a GTP-hydrolysis-dependent molecular chaperone, activating the urease apoprotein by helping to assemble the nickel containing metallocenter of UreC. The UreE protein probably delivers the nickel.

It is found in the cytoplasm. Its function is as follows. Facilitates the functional incorporation of the urease nickel metallocenter. This process requires GTP hydrolysis, probably effectuated by UreG. The protein is Urease accessory protein UreG of Sorangium cellulosum (strain So ce56) (Polyangium cellulosum (strain So ce56)).